Reading from the N-terminus, the 644-residue chain is 3-isopropylmalate dehydratase (644 aa).

3 residues coordinate [4Fe-4S] cluster: Cys400, Cys460, and Cys463. The tract at residues 521 to 568 (SEIPGTPKQSPRQEVVAEFESEEDDVDSSSVDSAPVATPPSTGDSAGM) is disordered. Positions 537–547 (AEFESEEDDVD) are enriched in acidic residues.

The protein belongs to the aconitase/IPM isomerase family. In terms of assembly, monomer. It depends on [4Fe-4S] cluster as a cofactor.

It carries out the reaction (2R,3S)-3-isopropylmalate = (2S)-2-isopropylmalate. Its pathway is amino-acid biosynthesis; L-leucine biosynthesis; L-leucine from 3-methyl-2-oxobutanoate: step 2/4. Functionally, catalyzes the isomerization between 2-isopropylmalate and 3-isopropylmalate, via the formation of 2-isopropylmaleate. This chain is 3-isopropylmalate dehydratase (LEUA), found in Mucor circinelloides f. lusitanicus (Mucor racemosus var. lusitanicus).